We begin with the raw amino-acid sequence, 272 residues long: MKPYLAAALQMTSRPNLTENLQEAEELIDLAVRQGAELVGLPENFAFLGNETEKLEQATAIATATEKFLQTMAQRFQVTILAGGFPFPVAGEAGKAYNTATLIAPNGQELARYHKVHLFDVNVPDGNTYWESATVMAGQKYPPVYHSDSFGNLGLSICYDVRFPELYRYLSRQGADVLFVPAAFTAYTGKDHWQVLLQARAIENTCYVIAPAQTGCHYERRHTHGHAMIIDPWGVILADAGEKPGLAIAEINPDRLKQVRQQMPSLQHRVFV.

The region spanning 1–253 is the CN hydrolase domain; sequence MKPYLAAALQ…PGLAIAEINP (253 aa). The Proton acceptor role is filled by Glu43. The active-site Proton donor is Lys115. Cys158 acts as the Nucleophile in catalysis.

The protein belongs to the carbon-nitrogen hydrolase superfamily. NIT1/NIT2 family.

The enzyme catalyses N-(4-oxoglutaryl)-L-cysteinylglycine + H2O = L-cysteinylglycine + 2-oxoglutarate. In terms of biological role, hydrolyzes deaminated glutathione (dGSH, 2-oxoglutaramate) to alpha-ketoglutarate (alpha-KG) and cysteinylglycine (specific activity 7.77 umol/min/mg), hydrolyzes alpha-ketoglutaramate (a-KGM, specific activity 2.13 umol/min/mg), has no activity on glutathione or L-glutamine. May function as a metabolite repair enzyme. This is Deaminated glutathione amidase from Synechocystis sp. (strain PCC 6803 / GT-S).